The following is a 395-amino-acid chain: Argininosuccinate synthase (395 aa).

An ATP-binding site is contributed by Ala-8 to Ser-16. L-citrulline contacts are provided by Tyr-86 and Ser-91. Gly-116 is a binding site for ATP. The L-aspartate site is built by Thr-118, Asn-122, and Asp-123. Asn-122 serves as a coordination point for L-citrulline. L-citrulline contacts are provided by Arg-126, Ser-172, Ser-181, Glu-257, and Tyr-269.

The protein belongs to the argininosuccinate synthase family. Type 1 subfamily. Homotetramer.

Its subcellular location is the cytoplasm. It catalyses the reaction L-citrulline + L-aspartate + ATP = 2-(N(omega)-L-arginino)succinate + AMP + diphosphate + H(+). It functions in the pathway amino-acid biosynthesis; L-arginine biosynthesis; L-arginine from L-ornithine and carbamoyl phosphate: step 2/3. This is Argininosuccinate synthase from Methanosarcina barkeri (strain Fusaro / DSM 804).